Here is a 349-residue protein sequence, read N- to C-terminus: Microbial Terpene synthase-like protein 1 (349 aa).

Residues aspartate 98, aspartate 102, asparagine 243, and serine 247 each contribute to the Mg(2+) site. A DDXXD motif motif is present at residues aspartate 98–aspartate 102.

The protein belongs to the terpene synthase family. Mg(2+) is required as a cofactor.

It participates in secondary metabolite biosynthesis; terpenoid biosynthesis. Its function is as follows. Sesquiterpene synthase converting farnesyl diphosphate to six sesquiterpenes, with beta-elemene, delta-cadinene and an unidentified oxygenated sesquiterpene as the major products. Has no diterpene synthase activity. This Selaginella moellendorffii (Spikemoss) protein is Microbial Terpene synthase-like protein 1.